Reading from the N-terminus, the 330-residue chain is Small ribosomal subunit protein mS35 (330 aa).

A disordered region spans residues 50–73 (AAGKGVRGQMKPRRQAGEPRTERM). The span at 64-73 (QAGEPRTERM) shows a compositional bias: basic and acidic residues.

Belongs to the mitochondrion-specific ribosomal protein mS35 family. Component of the mitochondrial ribosome small subunit (28S) which comprises a 12S rRNA and about 30 distinct proteins.

The protein resides in the mitochondrion. The sequence is that of Small ribosomal subunit protein mS35 (mrps35) from Danio rerio (Zebrafish).